A 253-amino-acid chain; its full sequence is Small ribosomal subunit protein uS2 (253 aa).

Residues 226–253 form a disordered region; that stretch reads QGADNADVEKELSESVEENSAEEVDDAE. Residues 239 to 253 show a composition bias toward acidic residues; it reads ESVEENSAEEVDDAE.

It belongs to the universal ribosomal protein uS2 family.

The polypeptide is Small ribosomal subunit protein uS2 (Lactobacillus delbrueckii subsp. bulgaricus (strain ATCC 11842 / DSM 20081 / BCRC 10696 / JCM 1002 / NBRC 13953 / NCIMB 11778 / NCTC 12712 / WDCM 00102 / Lb 14)).